The sequence spans 416 residues: D-amino acid dehydrogenase (416 aa).

3-17 is a binding site for FAD; the sequence is VIVLGAGIIGVTSAY.

It belongs to the DadA oxidoreductase family. FAD serves as cofactor.

It catalyses the reaction a D-alpha-amino acid + A + H2O = a 2-oxocarboxylate + AH2 + NH4(+). It participates in amino-acid degradation; D-alanine degradation; NH(3) and pyruvate from D-alanine: step 1/1. Its function is as follows. Oxidative deamination of D-amino acids. The polypeptide is D-amino acid dehydrogenase (Sinorhizobium medicae (strain WSM419) (Ensifer medicae)).